Consider the following 608-residue polypeptide: UvrABC system protein C (608 aa).

Residues 13-91 (HDPGVYRMFD…IKTFQPRYNV (79 aa)) enclose the GIY-YIG domain. The UVR domain maps to 201-236 (QQVLDHLIAKMETASRALDFENAARFRDQIQAVRAV).

It belongs to the UvrC family. As to quaternary structure, interacts with UvrB in an incision complex.

Its subcellular location is the cytoplasm. In terms of biological role, the UvrABC repair system catalyzes the recognition and processing of DNA lesions. UvrC both incises the 5' and 3' sides of the lesion. The N-terminal half is responsible for the 3' incision and the C-terminal half is responsible for the 5' incision. The polypeptide is UvrABC system protein C (Actinobacillus succinogenes (strain ATCC 55618 / DSM 22257 / CCUG 43843 / 130Z)).